The chain runs to 550 residues: Hydroxylamine reductase (550 aa).

Positions 3, 6, 18, and 25 each coordinate [2Fe-2S] cluster. 8 residues coordinate hybrid [4Fe-2O-2S] cluster: His249, Glu273, Cys317, Cys405, Cys433, Cys458, Glu492, and Lys494. Cys405 bears the Cysteine persulfide mark.

It belongs to the HCP family. [2Fe-2S] cluster is required as a cofactor. It depends on hybrid [4Fe-2O-2S] cluster as a cofactor.

Its subcellular location is the cytoplasm. It carries out the reaction A + NH4(+) + H2O = hydroxylamine + AH2 + H(+). Functionally, catalyzes the reduction of hydroxylamine to form NH(3) and H(2)O. The chain is Hydroxylamine reductase from Escherichia coli O6:H1 (strain CFT073 / ATCC 700928 / UPEC).